The following is a 582-amino-acid chain: Aspartate--tRNA ligase (582 aa).

E174 is a binding site for L-aspartate. The segment at 198–201 (QITK) is aspartate. R220 contributes to the L-aspartate binding site. ATP-binding positions include 220–222 (RDE) and Q229. H443 contributes to the L-aspartate binding site. Residue E477 participates in ATP binding. R484 lines the L-aspartate pocket. Residue 529 to 532 (GLDR) coordinates ATP.

Belongs to the class-II aminoacyl-tRNA synthetase family. Type 1 subfamily. In terms of assembly, homodimer.

The protein localises to the cytoplasm. The catalysed reaction is tRNA(Asp) + L-aspartate + ATP = L-aspartyl-tRNA(Asp) + AMP + diphosphate. Functionally, catalyzes the attachment of L-aspartate to tRNA(Asp) in a two-step reaction: L-aspartate is first activated by ATP to form Asp-AMP and then transferred to the acceptor end of tRNA(Asp). In Streptococcus pyogenes serotype M18 (strain MGAS8232), this protein is Aspartate--tRNA ligase.